The chain runs to 331 residues: Pyruvate synthase subunit PorB (331 aa).

4 residues coordinate [4Fe-4S] cluster: Cys21, Cys24, Cys59, and Cys222.

Heterotetramer of one alpha, one beta, one delta and one gamma chain. Requires [4Fe-4S] cluster as cofactor.

The catalysed reaction is 2 oxidized [2Fe-2S]-[ferredoxin] + pyruvate + CoA = 2 reduced [2Fe-2S]-[ferredoxin] + acetyl-CoA + CO2 + H(+). The polypeptide is Pyruvate synthase subunit PorB (porB) (Pyrococcus horikoshii (strain ATCC 700860 / DSM 12428 / JCM 9974 / NBRC 100139 / OT-3)).